The sequence spans 323 residues: MIRSVVRGMGAALPRRIMKNADFEGMVETSDEWIVQRTGIRQRHIAADDETTASLGEAAARAALANAGLTPGDIDLIVLATSTPNNTFPATAVEIQNRLGMHHGFAFDMQAVCSGFVYAVTTADLYIRGGLAKRVLVIGSETFSRILDWNDRSTCVLFGDGAGALILEAGEGAGTIADRGVLAASLRSDGVHKDKLFVDGGPSTTGTVGHLRMEGREVFKHAVGMITDVIEATFSAAGISADDLDWFVPHQANKRIIDASAKKLGIAEQKVVVTVDLHGNTSAASVPLALSVAVADGRIKKGDLVLLEAMGGGFTWGAVLVRW.

Catalysis depends on residues Cys-113 and His-250. An ACP-binding region spans residues 251–255; the sequence is QANKR. Residue Asn-280 is part of the active site.

The protein belongs to the thiolase-like superfamily. FabH family. Homodimer.

The protein localises to the cytoplasm. It catalyses the reaction malonyl-[ACP] + acetyl-CoA + H(+) = 3-oxobutanoyl-[ACP] + CO2 + CoA. The protein operates within lipid metabolism; fatty acid biosynthesis. Its function is as follows. Catalyzes the condensation reaction of fatty acid synthesis by the addition to an acyl acceptor of two carbons from malonyl-ACP. Catalyzes the first condensation reaction which initiates fatty acid synthesis and may therefore play a role in governing the total rate of fatty acid production. Possesses both acetoacetyl-ACP synthase and acetyl transacylase activities. Its substrate specificity determines the biosynthesis of branched-chain and/or straight-chain of fatty acids. In Mesorhizobium japonicum (strain LMG 29417 / CECT 9101 / MAFF 303099) (Mesorhizobium loti (strain MAFF 303099)), this protein is Beta-ketoacyl-[acyl-carrier-protein] synthase III.